The primary structure comprises 347 residues: DNA-directed RNA polymerase subunit alpha (347 aa).

The tract at residues 1–243 (MLIKQGERLI…DQISVFINFD (243 aa)) is alpha N-terminal domain (alpha-NTD). The tract at residues 260–347 (VNEHLFKSID…EWKRKQQNEA (88 aa)) is alpha C-terminal domain (alpha-CTD).

This sequence belongs to the RNA polymerase alpha chain family. In terms of assembly, homodimer. The RNAP catalytic core consists of 2 alpha, 1 beta, 1 beta' and 1 omega subunit. When a sigma factor is associated with the core the holoenzyme is formed, which can initiate transcription.

It carries out the reaction RNA(n) + a ribonucleoside 5'-triphosphate = RNA(n+1) + diphosphate. Functionally, DNA-dependent RNA polymerase catalyzes the transcription of DNA into RNA using the four ribonucleoside triphosphates as substrates. This is DNA-directed RNA polymerase subunit alpha from Desulfovibrio desulfuricans (strain ATCC 27774 / DSM 6949 / MB).